The chain runs to 241 residues: Transcription factor HEC1 (241 aa).

The 50-residue stretch at 128–177 (ISKDPQSVAARHRRERISERIRILQRLVPGGTKMDTASMLDEAIHYVKFL) folds into the bHLH domain.

In terms of assembly, homodimer. Interacts with SPT. Interacts with BZIP30. Flowers, especially in gynoecium.

It is found in the nucleus. In terms of biological role, required for the female reproductive tract development and fertility. The chain is Transcription factor HEC1 (HEC1) from Arabidopsis thaliana (Mouse-ear cress).